The chain runs to 252 residues: Chitooligosaccharide deacetylase (252 aa).

Mg(2+)-binding residues include His61 and His125.

Belongs to the YdjC deacetylase family. ChbG subfamily. Homodimer. Mg(2+) serves as cofactor.

It is found in the cytoplasm. The catalysed reaction is N,N'-diacetylchitobiose + H2O = N-acetyl-beta-D-glucosaminyl-(1-&gt;4)-D-glucosamine + acetate. It catalyses the reaction diacetylchitobiose-6'-phosphate + H2O = N'-monoacetylchitobiose-6'-phosphate + acetate. Its pathway is glycan degradation; chitin degradation. Its function is as follows. Involved in the degradation of chitin. ChbG is essential for growth on the acetylated chitooligosaccharides chitobiose and chitotriose but is dispensable for growth on cellobiose and chitosan dimer, the deacetylated form of chitobiose. Deacetylation of chitobiose-6-P and chitotriose-6-P is necessary for both the activation of the chb promoter by the regulatory protein ChbR and the hydrolysis of phosphorylated beta-glucosides by the phospho-beta-glucosidase ChbF. Catalyzes the removal of only one acetyl group from chitobiose-6-P to yield monoacetylchitobiose-6-P, the inducer of ChbR and the substrate of ChbF. This Salmonella heidelberg (strain SL476) protein is Chitooligosaccharide deacetylase.